Reading from the N-terminus, the 250-residue chain is 23S rRNA (guanosine-2'-O-)-methyltransferase RlmB (250 aa).

S-adenosyl-L-methionine-binding residues include G198, L218, and L227.

This sequence belongs to the class IV-like SAM-binding methyltransferase superfamily. RNA methyltransferase TrmH family. RlmB subfamily.

Its subcellular location is the cytoplasm. It carries out the reaction guanosine(2251) in 23S rRNA + S-adenosyl-L-methionine = 2'-O-methylguanosine(2251) in 23S rRNA + S-adenosyl-L-homocysteine + H(+). Its function is as follows. Specifically methylates the ribose of guanosine 2251 in 23S rRNA. The protein is 23S rRNA (guanosine-2'-O-)-methyltransferase RlmB of Pseudomonas syringae pv. tomato (strain ATCC BAA-871 / DC3000).